Consider the following 208-residue polypeptide: Protein-L-isoaspartate O-methyltransferase (208 aa).

Ser-59 is a catalytic residue.

The protein belongs to the methyltransferase superfamily. L-isoaspartyl/D-aspartyl protein methyltransferase family.

The protein localises to the cytoplasm. It catalyses the reaction [protein]-L-isoaspartate + S-adenosyl-L-methionine = [protein]-L-isoaspartate alpha-methyl ester + S-adenosyl-L-homocysteine. Functionally, catalyzes the methyl esterification of L-isoaspartyl residues in peptides and proteins that result from spontaneous decomposition of normal L-aspartyl and L-asparaginyl residues. It plays a role in the repair and/or degradation of damaged proteins. The protein is Protein-L-isoaspartate O-methyltransferase of Vibrio cholerae serotype O1 (strain ATCC 39541 / Classical Ogawa 395 / O395).